The chain runs to 264 residues: MLYRLVSHIPHILFKPVYDAYESYLLEKVKSGNIPKHVAIIMDGNRRWARKLEKPPWYGHLFGSKKLEEILEWCRELNIRTLTVYAFSTENFKRSKEEVEALMNLFEEKFKELVQDERVHRYGIRVNVLGRKDMLPENVRKAAEEAERATRKYSNYNLNIALAYGGRSEIADAVREIVRDVLEGKIKPEDIDEEAIKRYLYYPNMPDPDIVIRTGGEVRISNFLLYQIAYSELFFVDVYFPEFRKIDFLRIIREFQKRQRRFGR.

Aspartate 43 is an active-site residue. Position 43 (aspartate 43) interacts with Mg(2+). Residues 44-47 (GNRR), tryptophan 48, histidine 60, and 88-90 (STE) contribute to the substrate site. Asparagine 91 acts as the Proton acceptor in catalysis. Substrate-binding positions include phenylalanine 92, arginine 94, arginine 213, and 219-221 (RIS). Residue glutamate 232 coordinates Mg(2+).

The protein belongs to the UPP synthase family. Homodimer. It depends on Mg(2+) as a cofactor.

It carries out the reaction geranylgeranyl diphosphate + 7 isopentenyl diphosphate = tri-trans,hepta-cis-undecaprenyl diphosphate + 7 diphosphate. In terms of biological role, catalyzes the sequential condensation of isopentenyl diphosphate (IPP) with geranylgeranyl diphosphate (GGPP) to yield (2Z,6Z,10Z,14Z,18Z,22Z,26Z,30E,34E,38E)-undecaprenyl diphosphate (tritrans,heptacis-UPP). It is probably the precursor of glycosyl carrier lipids. This is Tritrans,polycis-undecaprenyl-diphosphate synthase (geranylgeranyl-diphosphate specific) from Thermococcus kodakarensis (strain ATCC BAA-918 / JCM 12380 / KOD1) (Pyrococcus kodakaraensis (strain KOD1)).